The primary structure comprises 154 residues: Large ribosomal subunit protein uL13 (154 aa).

Residues 131 to 154 form a disordered region; sequence DHKHEAQQPEVVDFKSMNSKNTRG.

It belongs to the universal ribosomal protein uL13 family. Part of the 50S ribosomal subunit.

Its function is as follows. This protein is one of the early assembly proteins of the 50S ribosomal subunit, although it is not seen to bind rRNA by itself. It is important during the early stages of 50S assembly. This is Large ribosomal subunit protein uL13 from Maricaulis maris (strain MCS10) (Caulobacter maris).